A 1137-amino-acid chain; its full sequence is Calcium-activated potassium channel subunit alpha-1 (1137 aa).

Residues 1–44 are Extracellular-facing; it reads MSNNINANNLNTDSSSSPVNVPKMDALIIPVTMEVPCDSRGQRM. Residues 45–65 traverse the membrane as a helical segment; sequence WWAFLASSMVTFFGGLFIILL. The Cytoplasmic portion of the chain corresponds to 66-137; it reads WRTLKYLWTV…MISAQTLTGR (72 aa). Residues 138-158 form a helical membrane-spanning segment; sequence VLVVLVFALSIGALVIYFIDS. At 159 to 173 the chain is on the extracellular side; it reads SNPIESCQNFYKDFT. Residues 174 to 194 traverse the membrane as a helical segment; it reads LQIDMAFNVFFLLYFGLRFIA. The Cytoplasmic segment spans residues 195 to 198; that stretch reads ANDK. The helical transmembrane segment at 199–219 threads the bilayer; the sequence is LWFWLEVNSVVDFFTVPPVFV. The Extracellular segment spans residues 220 to 223; sequence SVYL. A helical; Voltage-sensor membrane pass occupies residues 224–244; the sequence is NRSWLGLRFLRALRLIQFSEI. Residues 245–259 are Cytoplasmic-facing; the sequence is LQFLNILKTSNSIKL. The chain crosses the membrane as a helical span at residues 260–280; sequence VNLCSIFISTWLTAAGFIHLV. Residues 281-294 lie on the Extracellular side of the membrane; that stretch reads ENSGDPWENFQNNQ. An intramembrane region (pore-forming) is located at residues 295–317; sequence QLTYWECVYLLMVTMSTVGYGDV. A Selectivity for potassium motif is present at residues 311-314; the sequence is TVGY. The Extracellular portion of the chain corresponds to 318 to 326; it reads YAKTTLGRL. The helical transmembrane segment at 327-347 threads the bilayer; sequence FMVFFILGGLAMFASYVPEII. At 348 to 1137 the chain is on the cytoplasmic side; that stretch reads ELIGNRKKYG…KQKYVQEDRL (790 aa). Positions 366–508 constitute an RCK N-terminal 1 domain; that stretch reads RKHIVVCGHI…WNWKEGDDAI (143 aa). Residues Glu398, Gln421, and Glu423 each coordinate Mg(2+). The tract at residues 515–535 is segment S7; it reads LGFIAQSCLAPGLSTMLANLF. The segment at 572 to 592 is segment S8; it reads LSFPAVCELVFAKLKLLMIAI. Residues 636 to 640 form a heme-binding motif region; that stretch reads CKACH. Residues 660–688 form a disordered region; the sequence is EQPSTLSPKKKQRNGGMRNSPNSSPKLMR. The segment at 738–758 is segment S9; sequence VLSGHVVVCIFGDVKSALIGL. The RCK N-terminal 2 domain maps to 740 to 884; it reads SGHVVVCIFG…MDRSSPDNSP (145 aa). The short motif at 904–926 is the Calcium bowl element; the sequence is TELVNDSNVQFLDQDDDDDPDTE. 4 residues coordinate Ca(2+): Gln913, Asp916, Asp919, and Asp921. Residues 933–953 are segment S10; the sequence is FACGTAFAVSVLDSLMSATYF. Residues 1088 to 1112 are compositionally biased toward low complexity; it reads ASLSHSSHSSYSSSKKSSSVHSIPS. Residues 1088–1137 are disordered; that stretch reads ASLSHSSHSSYSSSKKSSSVHSIPSTANRPNRTKTRDSREKQKYVQEDRL. Residues 1121-1137 show a composition bias toward basic and acidic residues; sequence KTRDSREKQKYVQEDRL.

This sequence belongs to the potassium channel family. Calcium-activated (TC 1.A.1.3) subfamily. KCa1.1/KCNMA1 sub-subfamily. As to quaternary structure, homotetramer; which constitutes the calcium-activated potassium channel.

Its subcellular location is the cell membrane. It carries out the reaction K(+)(in) = K(+)(out). Its activity is regulated as follows. Ethanol and carbon monoxide-bound heme increase channel activation. Heme inhibits channel activation. Its function is as follows. Potassium channel activated by both membrane depolarization or increase in cytosolic Ca(2+) that mediates export of K(+). It is also activated by the concentration of cytosolic Mg(2+). Its activation dampens the excitatory events that elevate the cytosolic Ca(2+) concentration and/or depolarize the cell membrane. It therefore contributes to repolarization of the membrane potential. Plays a key role in controlling excitability in a number of systems, such as regulation of the contraction of smooth muscle, the tuning of hair cells in the cochlea, regulation of transmitter release, and innate immunity. In smooth muscles, its activation by high level of Ca(2+), caused by ryanodine receptors in the sarcoplasmic reticulum, regulates the membrane potential. In cochlea cells, its number and kinetic properties partly determine the characteristic frequency of each hair cell and thereby helps to establish a tonotopic map. Highly sensitive to both iberiotoxin (IbTx) and charybdotoxin (CTX). The protein is Calcium-activated potassium channel subunit alpha-1 (KCNMA1) of Gallus gallus (Chicken).